An 853-amino-acid polypeptide reads, in one-letter code: G-type lectin S-receptor-like serine/threonine-protein kinase SRK (853 aa).

A signal peptide spans 1 to 31 (MRGELPNKHHSYTFFVFLFFFLILFPDLSIS). Residues 32–441 (VNTLSATESL…FGERRTIRGK (410 aa)) lie on the Extracellular side of the membrane. Residues 34-154 (TLSATESLTI…KINESDEFLW (121 aa)) form the Bulb-type lectin domain. Asn-46, Asn-120, Asn-147, and Asn-243 each carry an N-linked (GlcNAc...) asparagine glycan. The region spanning 293–329 (PKDTCDLYGICGPYAYCDMSTSPTCNCIKGFQPLSPQ) is the EGF-like; atypical domain. 4 disulfides stabilise this stretch: Cys-297-Cys-309, Cys-303-Cys-317, Cys-378-Cys-403, and Cys-382-Cys-388. Positions 348-428 (CGEDRFFRLM…DGQDLFVRLA (81 aa)) constitute a PAN domain. Asn-387 carries N-linked (GlcNAc...) asparagine glycosylation. Residues 442–462 (IIGLIIGISLMLVLSFIIYCF) form a helical membrane-spanning segment. The Cytoplasmic portion of the chain corresponds to 463–853 (WKKKQKRARA…QITVSVINAR (391 aa)). In terms of domain architecture, Protein kinase spans 524–802 (FSDSNILGRG…PKMSSVVLML (279 aa)). ATP-binding positions include 530 to 538 (LGRGGFGIV) and Lys-552. A Phosphoserine modification is found at Ser-558. Positions 613-631 (TQSSNKLNWQTRFSIINGI) are caM-binding. Residue Asp-650 is the Proton acceptor of the active site. Phosphoserine is present on residues Ser-654 and Ser-667. Thr-684 is modified (phosphothreonine). Residues 807–838 (GEIPQPKRPGYCVGRSSLDTADSSSSTKRDSE) form a disordered region. Positions 822-832 (SSLDTADSSSS) are enriched in low complexity. Ser-831 is modified (phosphoserine).

It belongs to the protein kinase superfamily. Ser/Thr protein kinase family.

The protein resides in the cell membrane. It catalyses the reaction L-seryl-[protein] + ATP = O-phospho-L-seryl-[protein] + ADP + H(+). It carries out the reaction L-threonyl-[protein] + ATP = O-phospho-L-threonyl-[protein] + ADP + H(+). In terms of biological role, female specificity determinant of self-incompatibility. The chain is G-type lectin S-receptor-like serine/threonine-protein kinase SRK (SRK) from Arabidopsis thaliana (Mouse-ear cress).